The following is a 333-amino-acid chain: tRNA N6-adenosine threonylcarbamoyltransferase (333 aa).

Fe cation contacts are provided by histidine 111 and histidine 115. Substrate is bound by residues 134 to 138 (LVSGG), aspartate 167, glycine 180, and asparagine 272. Residue aspartate 300 participates in Fe cation binding.

This sequence belongs to the KAE1 / TsaD family. Requires Fe(2+) as cofactor.

The protein localises to the cytoplasm. The enzyme catalyses L-threonylcarbamoyladenylate + adenosine(37) in tRNA = N(6)-L-threonylcarbamoyladenosine(37) in tRNA + AMP + H(+). Functionally, required for the formation of a threonylcarbamoyl group on adenosine at position 37 (t(6)A37) in tRNAs that read codons beginning with adenine. Is involved in the transfer of the threonylcarbamoyl moiety of threonylcarbamoyl-AMP (TC-AMP) to the N6 group of A37, together with TsaE and TsaB. TsaD likely plays a direct catalytic role in this reaction. The chain is tRNA N6-adenosine threonylcarbamoyltransferase from Legionella pneumophila (strain Paris).